The following is a 130-amino-acid chain: MKYFTIFFIFFSLCMFGHVSGAGIRIVNELKNKKTLWMRCYSKNDVLGPTIIPNGGQFTDYFFHNLFGTTRFMCTLKQGPGFSHSQSFRAFKNSGLWDWRAREDGIYLRRIYKTKFDDDTDNLHKEQSWI.

A signal peptide spans 1-21 (MKYFTIFFIFFSLCMFGHVSG).

This sequence belongs to the plant self-incompatibility (S1) protein family.

It is found in the secreted. This Arabidopsis thaliana (Mouse-ear cress) protein is S-protein homolog 22.